The primary structure comprises 434 residues: Protein translocase subunit SecY (434 aa).

The next 10 membrane-spanning stretches (helical) occupy residues 19–39 (LFTLFVLFLFRVGSYLPIPGI), 73–93 (IFMLSIGPYISASIIVQLLVY), 117–137 (YLTIVAAVVQGYATSLYAKGI), 148–168 (YIFVAILTVTTGTFILLWFGE), 179–199 (TSLIIFSGIVVRLQAALFNLF), 209–229 (VNPVFVILIISIFILVVILII), 264–284 (VLPVIFASVLITLPLQILSGF), 300–320 (PNGFYYTFLNVILIIGFTYFY), 362–382 (FSGSIFLSIIAIIPFLVQNIF), and 391–411 (IMGGSSLLIMVGVALDTLIHI).

Belongs to the SecY/SEC61-alpha family. As to quaternary structure, component of the Sec protein translocase complex. Heterotrimer consisting of SecY, SecE and SecG subunits. The heterotrimers can form oligomers, although 1 heterotrimer is thought to be able to translocate proteins. Interacts with the ribosome. Interacts with SecDF, and other proteins may be involved. Interacts with SecA.

It is found in the cell inner membrane. Functionally, the central subunit of the protein translocation channel SecYEG. Consists of two halves formed by TMs 1-5 and 6-10. These two domains form a lateral gate at the front which open onto the bilayer between TMs 2 and 7, and are clamped together by SecE at the back. The channel is closed by both a pore ring composed of hydrophobic SecY resides and a short helix (helix 2A) on the extracellular side of the membrane which forms a plug. The plug probably moves laterally to allow the channel to open. The ring and the pore may move independently. In Borreliella burgdorferi (strain ATCC 35210 / DSM 4680 / CIP 102532 / B31) (Borrelia burgdorferi), this protein is Protein translocase subunit SecY.